The following is a 601-amino-acid chain: Glutathione-regulated potassium-efflux system protein KefB (601 aa).

13 helical membrane passes run 4-24 (ADLL…VPLA), 29-49 (IGAV…GLGF), 55-75 (EILH…GLEL), 87-107 (IFGV…GLLM), 111-131 (FLWQ…TAMA), 152-172 (VLLF…LLAG), 177-197 (HFDW…LIGG), 207-227 (FIAA…LVLS), 230-250 (LFMD…GVLL), 262-282 (AIDP…GMSL), 284-304 (LGVL…LVVI), 324-344 (MQFA…FSTA), and 356-376 (ALLL…MKGI). An RCK N-terminal domain is found at 400-519 (KPQVIVVGFG…AGVTQFSRET (120 aa)).

This sequence belongs to the monovalent cation:proton antiporter 2 (CPA2) transporter (TC 2.A.37) family. KefB subfamily. As to quaternary structure, interacts with the regulatory subunit KefG.

It is found in the cell inner membrane. Functionally, pore-forming subunit of a potassium efflux system that confers protection against electrophiles. Catalyzes K(+)/H(+) antiport. The chain is Glutathione-regulated potassium-efflux system protein KefB from Salmonella enteritidis PT4 (strain P125109).